The sequence spans 928 residues: Neuropilin-1 (928 aa).

Positions 1-21 (MLLRLLSCCCWLLCSLRSSWA) are cleaved as a signal peptide. Over 22–860 (SRNDKCGDTI…PGNVLKTLDP (839 aa)) the chain is Extracellular. Intrachain disulfides connect Cys-27-Cys-54, Cys-82-Cys-104, and Cys-147-Cys-173. CUB domains follow at residues 27-141 (CGDT…YEVF) and 147-265 (CSRN…FSVV). An N-linked (GlcNAc...) asparagine glycan is attached at Asn-150. The Ca(2+) site is built by Glu-195, Asp-209, and Asp-250. Residues Cys-206 and Cys-228 are joined by a disulfide bond. 3 N-linked (GlcNAc...) asparagine glycosylation sites follow: Asn-261, Asn-300, and Asn-523. Disulfide bonds link Cys-275/Cys-424 and Cys-431/Cys-584. F5/8 type C domains lie at 275–424 (CKEA…LYGC) and 431–584 (CSRM…LLGC). O-linked (Xyl...) (chondroitin sulfate) serine; alternate glycosylation occurs at Ser-613. O-linked (Xyl...) (heparan sulfate) serine; alternate glycosylation is present at Ser-613. The tract at residues 624-645 (GATGQSTETPTVEASPEEPDMT) is disordered. Positions 625–635 (ATGQSTETPTV) are enriched in polar residues. In terms of domain architecture, MAM spans 646–812 (HSDLDCKFGW…NHISPSQCRA (167 aa)). An O-linked (Xyl...) (chondroitin sulfate) serine glycan is attached at Ser-834. Asn-844 carries N-linked (GlcNAc...) asparagine glycosylation. A helical transmembrane segment spans residues 861 to 883 (ILITIIAMSALGVLLGAICGVVL). Residues 884–928 (YCACWHNGMSERNLSALENYNFELVDGVKLKKDKLNTQNSYSEAS) lie on the Cytoplasmic side of the membrane.

It belongs to the neuropilin family. Homodimer, and heterodimer. In terms of tissue distribution, retinal ganglion cells and visual center neurons.

Its subcellular location is the mitochondrion membrane. It is found in the cell membrane. Functionally, receptor involved in the development of the cardiovascular system, in angiogenesis, in the formation of certain neuronal circuits and in organogenesis outside the nervous system. Mediates the chemorepulsant activity of semaphorins. Binding to VEGFA initiates a signaling pathway needed for motor neuron axon guidance and cell body migration, including for the caudal migration of facial motor neurons from rhombomere 4 to rhombomere 6 during embryonic development. Regulates mitochondrial iron transport via interaction. The polypeptide is Neuropilin-1 (nrp1) (Xenopus laevis (African clawed frog)).